The chain runs to 203 residues: Superoxide dismutase [Mn] (203 aa).

Mn(2+)-binding residues include His27, His81, Asp167, and His171.

It belongs to the iron/manganese superoxide dismutase family. In terms of assembly, homodimer. The cofactor is Mn(2+).

It catalyses the reaction 2 superoxide + 2 H(+) = H2O2 + O2. Functionally, destroys superoxide anion radicals which are normally produced within the cells and which are toxic to biological systems. This chain is Superoxide dismutase [Mn] (sodA), found in Buchnera aphidicola subsp. Acyrthosiphon pisum (strain APS) (Acyrthosiphon pisum symbiotic bacterium).